Reading from the N-terminus, the 578-residue chain is Aspartate--tRNA ligase (578 aa).

Glu169 serves as a coordination point for L-aspartate. Residues 191–194 (QTFK) are aspartate. An L-aspartate-binding site is contributed by Arg213. ATP contacts are provided by residues 213–215 (RDE) and Gln222. His440 is a binding site for L-aspartate. Glu474 is a binding site for ATP. An L-aspartate-binding site is contributed by Arg481. 526 to 529 (GLDR) lines the ATP pocket.

This sequence belongs to the class-II aminoacyl-tRNA synthetase family. Type 1 subfamily. Homodimer.

The protein localises to the cytoplasm. It carries out the reaction tRNA(Asp) + L-aspartate + ATP = L-aspartyl-tRNA(Asp) + AMP + diphosphate. Its function is as follows. Catalyzes the attachment of L-aspartate to tRNA(Asp) in a two-step reaction: L-aspartate is first activated by ATP to form Asp-AMP and then transferred to the acceptor end of tRNA(Asp). This Ureaplasma parvum serovar 3 (strain ATCC 700970) protein is Aspartate--tRNA ligase.